The primary structure comprises 637 residues: Probable polypeptide N-acetylgalactosaminyltransferase 8 (637 aa).

At 1–6 (MMFWRK) the chain is on the cytoplasmic side. Residues 7-29 (LPKALFIGLTLAIAVNLLLVFSS) form a helical; Signal-anchor for type II membrane protein membrane-spanning segment. The Lumenal segment spans residues 30 to 637 (KGTLQNLFTG…VRDWGQTNSQ (608 aa)). N-linked (GlcNAc...) asparagine glycosylation is found at asparagine 85, asparagine 107, and asparagine 160. Intrachain disulfides connect cysteine 171/cysteine 404, cysteine 395/cysteine 474, cysteine 509/cysteine 525, cysteine 556/cysteine 571, and cysteine 599/cysteine 617. The catalytic subdomain A stretch occupies residues 180–294 (LPSLSVILIF…VGWAEPILAR (115 aa)). Substrate is bound by residues aspartate 221 and arginine 255. Residues aspartate 278, histidine 280, and histidine 409 each coordinate Mn(2+). Residues 351 to 412 (PVKSPSIMGI…PCSRIAHLER (62 aa)) form a catalytic subdomain B region. Substrate is bound by residues arginine 412 and tyrosine 417. In terms of domain architecture, Ricin B-type lectin spans 496-634 (GYGRMKNLLD…QHTVRDWGQT (139 aa)).

Belongs to the glycosyltransferase 2 family. GalNAc-T subfamily. Requires Mn(2+) as cofactor. In terms of tissue distribution, widely expressed. Expressed in heart, skeletal muscle, kidney, liver, small intestine and placenta. Weakly expressed in colon, thymus, spleen, lung and leukocyte.

It localises to the golgi apparatus membrane. The enzyme catalyses L-seryl-[protein] + UDP-N-acetyl-alpha-D-galactosamine = a 3-O-[N-acetyl-alpha-D-galactosaminyl]-L-seryl-[protein] + UDP + H(+). The catalysed reaction is L-threonyl-[protein] + UDP-N-acetyl-alpha-D-galactosamine = a 3-O-[N-acetyl-alpha-D-galactosaminyl]-L-threonyl-[protein] + UDP + H(+). Its pathway is protein modification; protein glycosylation. Probably catalyzes the initial reaction in O-linked oligosaccharide biosynthesis, the transfer of an N-acetyl-D-galactosamine residue to a serine or threonine residue on the protein receptor. The chain is Probable polypeptide N-acetylgalactosaminyltransferase 8 (GALNT8) from Homo sapiens (Human).